The chain runs to 95 residues: Aspartyl/glutamyl-tRNA(Asn/Gln) amidotransferase subunit C (95 aa).

The protein belongs to the GatC family. Heterotrimer of A, B and C subunits.

The enzyme catalyses L-glutamyl-tRNA(Gln) + L-glutamine + ATP + H2O = L-glutaminyl-tRNA(Gln) + L-glutamate + ADP + phosphate + H(+). It carries out the reaction L-aspartyl-tRNA(Asn) + L-glutamine + ATP + H2O = L-asparaginyl-tRNA(Asn) + L-glutamate + ADP + phosphate + 2 H(+). Its function is as follows. Allows the formation of correctly charged Asn-tRNA(Asn) or Gln-tRNA(Gln) through the transamidation of misacylated Asp-tRNA(Asn) or Glu-tRNA(Gln) in organisms which lack either or both of asparaginyl-tRNA or glutaminyl-tRNA synthetases. The reaction takes place in the presence of glutamine and ATP through an activated phospho-Asp-tRNA(Asn) or phospho-Glu-tRNA(Gln). The polypeptide is Aspartyl/glutamyl-tRNA(Asn/Gln) amidotransferase subunit C (Pelodictyon phaeoclathratiforme (strain DSM 5477 / BU-1)).